Consider the following 192-residue polypeptide: Ribosome hibernation promotion factor (192 aa).

The disordered stretch occupies residues Arg-95–Thr-129. Acidic residues predominate over residues Asn-120–Thr-129.

This sequence belongs to the HPF/YfiA ribosome-associated protein family. Long HPF subfamily. Interacts with 100S ribosomes.

It localises to the cytoplasm. Functionally, required for dimerization of active 70S ribosomes into 100S ribosomes in stationary phase; 100S ribosomes are translationally inactive and sometimes present during exponential growth. The polypeptide is Ribosome hibernation promotion factor (Staphylococcus haemolyticus (strain JCSC1435)).